The following is a 155-amino-acid chain: Endoribonuclease YbeY (155 aa).

Histidine 117, histidine 121, and histidine 127 together coordinate Zn(2+).

This sequence belongs to the endoribonuclease YbeY family. Zn(2+) is required as a cofactor.

Its subcellular location is the cytoplasm. In terms of biological role, single strand-specific metallo-endoribonuclease involved in late-stage 70S ribosome quality control and in maturation of the 3' terminus of the 16S rRNA. This Treponema denticola (strain ATCC 35405 / DSM 14222 / CIP 103919 / JCM 8153 / KCTC 15104) protein is Endoribonuclease YbeY.